The chain runs to 217 residues: Large ribosomal subunit protein uL1 (217 aa).

The protein belongs to the universal ribosomal protein uL1 family. Part of the 50S ribosomal subunit.

Binds directly to 23S rRNA. The L1 stalk is quite mobile in the ribosome, and is involved in E site tRNA release. In terms of biological role, protein L1 is also a translational repressor protein, it controls the translation of the L11 operon by binding to its mRNA. The polypeptide is Large ribosomal subunit protein uL1 (Anaplasma marginale (strain St. Maries)).